The chain runs to 57 residues: Small hydrophobic protein (57 aa).

Over 1–8 (MPAIQPPL) the chain is Virion surface. Residues 9 to 29 (YLTFLLLILLYLIITLYVWTI) form a helical membrane-spanning segment. Topologically, residues 30–57 (LTINHKTAVRYAALYQRSCSRWGFDQSL) are intravirion.

This sequence belongs to the rubulavirus small hydrophobic protein family. Interacts with host TNFRSF1A, RIPK1 and IRAK1; these interactions interfere with host NF-kappa-B activation at the level of receptor complexes. Interacts with host protein UBQLN4.

The protein resides in the virion membrane. The protein localises to the host cell membrane. In terms of biological role, plays a role in the inhibition of the host NF-kappa-B pathway. This inhibition occurs at the receptor level, by preventing the signaling of TNFR1 as well as IL-1R and TLR3. The protein is Small hydrophobic protein (SH) of Mumps virus (strain Enders) (MuV).